A 333-amino-acid polypeptide reads, in one-letter code: MKHLNETTNVRILSQFDMDTGYQAVVQKGNVGSKYVYGLQLRKGATTILRGYRGSKINNPILELSGQAGGHTQTWEFAGDRKDINGEERAGQWFIGVKPSKIEGSKIIWAKQIARVDLRNQMGPHYSNTDFPRLSYLNRAGSNPFAGNKMTHAEAAVSPDYTKFLIATVENNCIGHFTIYNLDTINEKLDEKGNSEDVNLETVKYEDSFIIDNLYGDDNNSIVNSIQGYDLDNDGNIYISSQKAPDFDGSYYAHHKQIVKIPYYARSKESEDQWRAVNLSEFGGLDIPGKHSEVESIQIIGENHCYLTVAYHSKNKAGENKTTLNEIYELSWN.

This heat-sensitive bacteriocin inhibits the growth of closely related Lactobacillus species. This is Bacteriocin helveticin-J (hlv) from Lactobacillus helveticus (Lactobacillus suntoryeus).